Reading from the N-terminus, the 377-residue chain is Nitric oxide reductase FlRd-NAD(+) reductase (377 aa).

Belongs to the FAD-dependent oxidoreductase family. Requires FAD as cofactor.

The protein resides in the cytoplasm. The catalysed reaction is 2 reduced [nitric oxide reductase rubredoxin domain] + NAD(+) + H(+) = 2 oxidized [nitric oxide reductase rubredoxin domain] + NADH. The protein operates within nitrogen metabolism; nitric oxide reduction. Its function is as follows. One of at least two accessory proteins for anaerobic nitric oxide (NO) reductase. Reduces the rubredoxin moiety of NO reductase. This is Nitric oxide reductase FlRd-NAD(+) reductase from Escherichia coli O7:K1 (strain IAI39 / ExPEC).